The chain runs to 780 residues: LPS-assembly protein LptD (780 aa).

The N-terminal stretch at methionine 1 to alanine 24 is a signal peptide.

This sequence belongs to the LptD family. Component of the lipopolysaccharide transport and assembly complex. Interacts with LptE and LptA.

The protein resides in the cell outer membrane. In terms of biological role, together with LptE, is involved in the assembly of lipopolysaccharide (LPS) at the surface of the outer membrane. The sequence is that of LPS-assembly protein LptD from Sodalis glossinidius (strain morsitans).